The sequence spans 507 residues: Aromatase (507 aa).

Cys-436 serves as a coordination point for heme.

This sequence belongs to the cytochrome P450 family. It depends on heme as a cofactor.

The protein localises to the membrane. The enzyme catalyses testosterone + 3 reduced [NADPH--hemoprotein reductase] + 3 O2 = 17beta-estradiol + formate + 3 oxidized [NADPH--hemoprotein reductase] + 4 H2O + 4 H(+). It catalyses the reaction androst-4-ene-3,17-dione + 3 reduced [NADPH--hemoprotein reductase] + 3 O2 = estrone + formate + 3 oxidized [NADPH--hemoprotein reductase] + 4 H2O + 4 H(+). Functionally, catalyzes the formation of aromatic C18 estrogens from C19 androgens. The protein is Aromatase (CYP19A1) of Gallus gallus (Chicken).